A 43-amino-acid chain; its full sequence is Neurotrophic factor BDNF (43 aa).

The protein belongs to the NGF-beta family.

It localises to the secreted. Functionally, promotes the survival of neuronal populations that are all located either in the central nervous system or directly connected to it. This chain is Neurotrophic factor BDNF (BDNF), found in Macrovipera lebetinus (Levantine viper).